A 428-amino-acid chain; its full sequence is Stromal membrane-associated protein 2 (428 aa).

An Arf-GAP domain is found at 13–139 (QAVLANLLLE…INVLRKEKDD (127 aa)). The C4-type zinc-finger motif lies at 28-51 (CADCQSKGPRWASWNIGVFICIRC). 5 positions are modified to phosphoserine: S127, S219, S224, S230, and S239. The interval 163-231 (MPQKKEDAQL…SVSRKAVGSM (69 aa)) is interaction with clathrin heavy chains. A disordered region spans residues 218-262 (PSPSSVSRKAVGSMPTAGSAGSVPENLNLFPEPGSKSEETGKKQL). The span at 252–262 (SKSEETGKKQL) shows a compositional bias: basic and acidic residues. Residues 339–428 (MGGMQASMMG…NQTLSPQMWK (90 aa)) form an interaction with PICALM region.

Interacts with ARF1. Interacts with PICALM and clathrin heavy chains.

The protein resides in the cytoplasm. GTPase activating protein that acts on ARF1. Can also activate ARF6 (in vitro). May play a role in clathrin-dependent retrograde transport from early endosomes to the trans-Golgi network. In Mus musculus (Mouse), this protein is Stromal membrane-associated protein 2 (Smap2).